The chain runs to 61 residues: Small ribosomal subunit protein uS14 (61 aa).

Zn(2+)-binding residues include Cys24, Cys27, Cys40, and Cys43.

It belongs to the universal ribosomal protein uS14 family. Zinc-binding uS14 subfamily. In terms of assembly, part of the 30S ribosomal subunit. Contacts proteins S3 and S10. It depends on Zn(2+) as a cofactor.

Functionally, binds 16S rRNA, required for the assembly of 30S particles and may also be responsible for determining the conformation of the 16S rRNA at the A site. The polypeptide is Small ribosomal subunit protein uS14 (Mycobacterium sp. (strain JLS)).